A 136-amino-acid polypeptide reads, in one-letter code: Large ribosomal subunit protein uL16 (136 aa).

This sequence belongs to the universal ribosomal protein uL16 family. As to quaternary structure, part of the 50S ribosomal subunit.

In terms of biological role, binds 23S rRNA and is also seen to make contacts with the A and possibly P site tRNAs. This Mesomycoplasma hyopneumoniae (strain 232) (Mycoplasma hyopneumoniae) protein is Large ribosomal subunit protein uL16.